The primary structure comprises 323 residues: Breast cancer metastasis-suppressor 1-like protein (323 aa).

A compositionally biased stretch (basic and acidic residues) spans 1–15 (MPVHSREKKENNHDE). Residues 1 to 56 (MPVHSREKKENNHDEMEVDYGENEGSTSEEEETESSSVSEEGDSSEMDDEDCERRR) are disordered. The span at 16 to 51 (MEVDYGENEGSTSEEEETESSSVSEEGDSSEMDDED) shows a compositional bias: acidic residues. 2 coiled-coil regions span residues 50–82 (EDCERRRMECLDEMSNLEKQFTDLKDQLYKERL) and 147–178 (EKLLLYDTVQSELEEKIRRLEEDRHSIDITSE).

Belongs to the BRMS1 family.

Its subcellular location is the nucleus. Functionally, involved in the histone deacetylase (HDAC1)-dependent transcriptional repression activity. This is Breast cancer metastasis-suppressor 1-like protein (BRMS1L) from Gallus gallus (Chicken).